The following is a 225-amino-acid chain: MNGIRDVVKEEQPRERLLLEGAGSLSNRELLAVLLRTGSKEESVLKLSDKILHHFDGLRMLKDATLEELVSIHGVGVAKASQLIAAFELGRRMVRLEYQNRYSIRNPEDCARYMMEEMRFLQQEHFVCLYLNTKNQVIHRQTIFIGSLNSSIVHPREVFKEAFRRAAASIICLHNHPSGDPAPSREDIEVTKRLVECGRIIGIEVLDHIIIGDHKFVSLKEKGHI.

An MPN domain is found at 103-225; sequence SIRNPEDCAR…FVSLKEKGHI (123 aa). Histidine 174, histidine 176, and aspartate 187 together coordinate Zn(2+). Positions 174–187 match the JAMM motif motif; sequence HNHPSGDPAPSRED.

This sequence belongs to the UPF0758 family.

This chain is UPF0758 protein BCE33L4198, found in Bacillus cereus (strain ZK / E33L).